The sequence spans 273 residues: Putative pyruvate, phosphate dikinase regulatory protein 2 (273 aa).

151 to 158 (GVSRTSKT) provides a ligand contact to ADP.

It belongs to the pyruvate, phosphate/water dikinase regulatory protein family. PDRP subfamily.

The catalysed reaction is N(tele)-phospho-L-histidyl/L-threonyl-[pyruvate, phosphate dikinase] + ADP = N(tele)-phospho-L-histidyl/O-phospho-L-threonyl-[pyruvate, phosphate dikinase] + AMP + H(+). The enzyme catalyses N(tele)-phospho-L-histidyl/O-phospho-L-threonyl-[pyruvate, phosphate dikinase] + phosphate + H(+) = N(tele)-phospho-L-histidyl/L-threonyl-[pyruvate, phosphate dikinase] + diphosphate. Functionally, bifunctional serine/threonine kinase and phosphorylase involved in the regulation of the pyruvate, phosphate dikinase (PPDK) by catalyzing its phosphorylation/dephosphorylation. The protein is Putative pyruvate, phosphate dikinase regulatory protein 2 of Syntrophomonas wolfei subsp. wolfei (strain DSM 2245B / Goettingen).